We begin with the raw amino-acid sequence, 369 residues long: Peptide chain release factor 1 (369 aa).

Gln238 bears the N5-methylglutamine mark.

This sequence belongs to the prokaryotic/mitochondrial release factor family. Methylated by PrmC. Methylation increases the termination efficiency of RF1.

The protein localises to the cytoplasm. Its function is as follows. Peptide chain release factor 1 directs the termination of translation in response to the peptide chain termination codons UAG and UAA. This is Peptide chain release factor 1 from Parabacteroides distasonis (strain ATCC 8503 / DSM 20701 / CIP 104284 / JCM 5825 / NCTC 11152).